A 139-amino-acid chain; its full sequence is Large ribosomal subunit protein uL16 (139 aa).

Over residues 1–13 (MLQPARRKYRKEQ) the composition is skewed to basic residues. The segment at 1–23 (MLQPARRKYRKEQKGRNTGISHS) is disordered.

The protein belongs to the universal ribosomal protein uL16 family. In terms of assembly, part of the 50S ribosomal subunit.

In terms of biological role, binds 23S rRNA and is also seen to make contacts with the A and possibly P site tRNAs. This is Large ribosomal subunit protein uL16 from Herminiimonas arsenicoxydans.